The following is a 245-amino-acid chain: Transmembrane and ubiquitin-like domain-containing protein 1 (245 aa).

The segment at 2–30 (ALIEGVGDEVTVLFSVLACLLVLALAWVS) is required to release iHOPS from membranes. The chain crosses the membrane as a helical span at residues 11-31 (VTVLFSVLACLLVLALAWVST). The segment covering 34-51 (TESTDPLPQSSGTTTPAQ) has biased composition (polar residues). Positions 34 to 100 (TESTDPLPQS…ASTPPDSPQE (67 aa)) are disordered. 3 positions are modified to phosphoserine: Ser-73, Ser-97, and Ser-126. Positions 102-175 (LLLRLKFLND…LHCHVSTRVG (74 aa)) constitute a Ubiquitin-like domain. The next 2 helical transmembrane spans lie at 194–214 (IGSLLLPLLLLLLLLLWYCQI) and 219–239 (FFPLTATLGLAGFTLLLSLLA).

In terms of assembly, interacts with EEF1A1, GRIA2, GRIP1. Interacts with CAMLG, TUBG1. Interacts with NPM1 and CDKN2A; TMUB1 can enhance interaction between NPM1 and CDKN2A and is proposed to bridge the proteins; proposed to be mediated by iHOPS. Interacts with ERLIN2 and AMFR; TMUB1 promotes the interaction of ERLIN2 with AMFR. Processed by regulated intramembrane proteolysis (RIP) in the N-terminus to release iHOPS from membranes.

It is found in the membrane. The protein localises to the postsynaptic cell membrane. The protein resides in the recycling endosome. It localises to the cytoplasm. Its subcellular location is the cytoskeleton. It is found in the microtubule organizing center. The protein localises to the centrosome. The protein resides in the nucleus. It localises to the nucleolus. Its function is as follows. Involved in sterol-regulated ubiquitination and degradation of HMG-CoA reductase HMGCR. Involved in positive regulation of AMPA-selective glutamate receptor GRIA2 recycling to the cell surface. Acts as a negative regulator of hepatocyte growth during regeneration. May contribute to the regulation of translation during cell-cycle progression. May contribute to the regulation of cell proliferation. May be involved in centrosome assembly. Modulates stabilization and nucleolar localization of tumor suppressor CDKN2A and enhances association between CDKN2A and NPM1. The protein is Transmembrane and ubiquitin-like domain-containing protein 1 (Tmub1) of Rattus norvegicus (Rat).